The chain runs to 915 residues: Protein inturned (915 aa).

The interval 88 to 144 (NAKRQANSSNKSEAKLKKLTKILRRKRRPSQRKAEGKDSSQRPASILKNQAGQRPGV) is disordered. The segment covering 104 to 118 (KKLTKILRRKRRPSQ) has biased composition (basic residues). The segment covering 128–139 (QRPASILKNQAG) has biased composition (polar residues). The 89-residue stretch at 165–253 (SVSSSSADRG…PMQVRLTLET (89 aa)) folds into the PDZ domain. Residues 688–738 (GIRGRRASPQRSQSDSGSEGHADGTPASVARRDSLGSGGSDGSLGSAGFLK) form a disordered region.

This sequence belongs to the inturned family.

It localises to the cytoplasm. Its subcellular location is the cell surface. The protein resides in the cytoskeleton. The protein localises to the cilium basal body. Plays a key role in ciliogenesis and embryonic development. Regulator of cilia formation by controlling the organization of the apical actin cytoskeleton and the positioning of the basal bodies at the apical cell surface, which in turn is essential for the normal orientation of elongating ciliary microtubules. Plays a key role in definition of cell polarity via its role in ciliogenesis but not via conversion extension. Has an indirect effect on hedgehog signaling. This chain is Protein inturned (intu), found in Danio rerio (Zebrafish).